Reading from the N-terminus, the 171-residue chain is uncharacterized protein (171 aa).

The segment at 56-83 (TVGVNKNAKNGPTQSQTRSGSAGAQARM) is disordered. The segment covering 57-77 (VGVNKNAKNGPTQSQTRSGSA) has biased composition (polar residues). A J domain is found at 113–170 (KAFETLGLGASATTADIKAAYKDLVKKHHPDANGGDRGSEERFRAVIQAYQLLKQAGF).

This is an uncharacterized protein from Sinorhizobium sp.